The following is a 280-amino-acid chain: Bis(5'-nucleosyl)-tetraphosphatase, symmetrical (280 aa).

The protein belongs to the Ap4A hydrolase family.

The enzyme catalyses P(1),P(4)-bis(5'-adenosyl) tetraphosphate + H2O = 2 ADP + 2 H(+). In terms of biological role, hydrolyzes diadenosine 5',5'''-P1,P4-tetraphosphate to yield ADP. The sequence is that of Bis(5'-nucleosyl)-tetraphosphatase, symmetrical from Shigella boydii serotype 18 (strain CDC 3083-94 / BS512).